The sequence spans 156 residues: EPIDERMAL PATTERNING FACTOR-like protein 6 (156 aa).

An N-terminal signal peptide occupies residues 1–47 (MGFERTSSSLSLLSSSLPSSLQPSENTRAKFSLFYLLLLFFVLCVIA). Intrachain disulfides connect Cys-113–Cys-147, Cys-117–Cys-123, and Cys-120–Cys-149.

It belongs to the plant cysteine rich small secretory peptide family. Epidermal patterning factor subfamily. As to quaternary structure, interacts with ERECTA. As to expression, expressed in the internal layers of the root, hypocotyl and stems, and in the midrib of developing rosette leaves. Detected in a ring of cells surrounding the vascular elements. Expressed in developing stems soon after bolting, in inflorescence stems, near the root apex and in the chalazal region of ovules. Not found in cotyledons or in stomatal precursors or stomata.

The protein resides in the secreted. Functionally, acts primarily as positive regulator of inflorescence growth. Endodermal expression is sufficient for proper inflorescence architecture. Redundantly involved with EPFL4 in procambial development regulation. Also acts as tissue-specific regulator of epidermal pattern. Controls stomatal patterning by repressing stomatal production. TMM (AC Q9SSD1) functions to dampen or block CHAL signaling. Not processed by SDD1 (AC O64495). Acts as growth-regulatory ligand for ERECTA family receptors. The chain is EPIDERMAL PATTERNING FACTOR-like protein 6 from Arabidopsis thaliana (Mouse-ear cress).